The primary structure comprises 144 residues: Large ribosomal subunit protein uL15 (144 aa).

The segment at 1 to 53 (MYLNTLAPAEGAKHSAKRLGRGIGSGLGKTGGRGHKGQKSRTGGGVRRGFEGG) is disordered. Residues 21–31 (RGIGSGLGKTG) show a composition bias toward gly residues.

This sequence belongs to the universal ribosomal protein uL15 family. As to quaternary structure, part of the 50S ribosomal subunit.

In terms of biological role, binds to the 23S rRNA. In Mannheimia succiniciproducens (strain KCTC 0769BP / MBEL55E), this protein is Large ribosomal subunit protein uL15.